A 605-amino-acid chain; its full sequence is Leucine aminopeptidase (605 aa).

Residues Lys374, Asp379, and Lys386 each coordinate a peptide. Zn(2+)-binding residues include Lys374 and Asp379. Residues 384-401 are L13 loop; it reads NLKAAPGSMIDLMKFDMS. Lys386 is an active-site residue. Positions 394, 396, 399, 459, and 461 each coordinate Zn(2+). Asp399 and Asp459 together coordinate a peptide. Residue Arg463 is part of the active site.

Belongs to the peptidase M17 family. Homohexamer composed of dimer of trimers. Both the identity and concentration of metal ions available dictate the extent to which oligomerization occurs; Mn(2+) and Co(2+) induces oligomerization, whereas Mg(2+) has no effect, and Zn(2+) causes irreversible protein aggregation in vitro. Zn(2+) is required as a cofactor.

It is found in the cytoplasm. The enzyme catalyses Release of an N-terminal amino acid, Xaa-|-Yaa-, in which Xaa is preferably Leu, but may be other amino acids including Pro although not Arg or Lys, and Yaa may be Pro. Amino acid amides and methyl esters are also readily hydrolyzed, but rates on arylamides are exceedingly low.. It carries out the reaction L-cysteinylglycine + H2O = L-cysteine + glycine. Its activity is regulated as follows. Oligomerization is required for catalytic activity and is metal-dependent. The type of metal that binds the 2 metal binding sites influences catalytic activity and substrate specificity. In vitro, activated by Co(2+), Mn(2+), Ni(2+), Mg(2+) and Zn(2+) with decreasing strength. Occupancy of the site 2 is essential and sufficient for activating the enzyme but occupation of the 2 sites is necessary for full catalytic activity. Inhibited by fungal metabolite bestatin. Inhibited by Phe-Naphthyl (PNAP). Its function is as follows. Aminopeptidase which preferentially cleaves leucine residues from the N-terminus of peptides. Also, has some activity towards tryptophan and methionine and to a lesser extent towards phenylalanine. Has very low activity or no activity towards the other amino acids. In addition, cleaves the Cys-Gly dipeptide, probably as part of the glutathione regulation pathway; cleavage only occurs in the presence of Mn(2+). During the asexual blood stage, plays a role in the final step of host hemoglobin catabolism, by cleaving hemoglobin-derived oligopeptides providing a source of amino acids for the parasite protein synthesis and for the maintenance of osmotic homeostasis. During the asexual blood stage, may also play a role during the ring-trophozoite transition. The polypeptide is Leucine aminopeptidase (Plasmodium falciparum (isolate 3D7)).